We begin with the raw amino-acid sequence, 38 residues long: A2-specific pheromone (38 aa).

Cys35 carries the cysteine methyl ester modification. Residue Cys35 is the site of S-farnesyl cysteine attachment. Residues 36–38 (LIA) constitute a propeptide, removed in mature form.

The protein localises to the cell membrane. Functionally, mating pheromone for A2 allele. This Mycosarcoma maydis (Corn smut fungus) protein is A2-specific pheromone (MFA2).